A 153-amino-acid polypeptide reads, in one-letter code: Nucleoside diphosphate kinase (153 aa).

Positions 12, 60, 88, 94, 105, and 115 each coordinate ATP. The Pros-phosphohistidine intermediate role is filled by His118.

Belongs to the NDK family. Mg(2+) is required as a cofactor.

The protein resides in the cytoplasm. The catalysed reaction is a 2'-deoxyribonucleoside 5'-diphosphate + ATP = a 2'-deoxyribonucleoside 5'-triphosphate + ADP. It catalyses the reaction a ribonucleoside 5'-diphosphate + ATP = a ribonucleoside 5'-triphosphate + ADP. Functionally, major role in the synthesis of nucleoside triphosphates other than ATP. The ATP gamma phosphate is transferred to the NDP beta phosphate via a ping-pong mechanism, using a phosphorylated active-site intermediate. The protein is Nucleoside diphosphate kinase of Natronomonas pharaonis (strain ATCC 35678 / DSM 2160 / CIP 103997 / JCM 8858 / NBRC 14720 / NCIMB 2260 / Gabara) (Halobacterium pharaonis).